We begin with the raw amino-acid sequence, 215 residues long: 25 kDa ookinete surface antigen (215 aa).

The first 16 residues, 1–16 (MNMSYLFFFFFIQLVL), serve as a signal peptide directing secretion. Residues 29–58 (CKDGFLIQMSNHFECNCNPGFVLTSESTCE) enclose the EGF-like 1; truncated domain. EGF-like domains lie at 59–104 (NKVE…SICV), 104–148 (VPNE…NTCT), and 151–191 (GQTE…NACI). Disulfide bonds link C63–C78, C72–C90, C92–C103, C108–C118, C113–C131, C133–C147, C155–C166, C159–C175, and C177–C190. N144 and N163 each carry an N-linked (GlcNAc...) asparagine glycan. S192 is lipidated: GPI-anchor amidated serine. A propeptide spans 193–215 (FSLFNILNLSIIFIISLIYFYII) (removed in mature form). An N-linked (GlcNAc...) asparagine glycan is attached at N200.

The protein localises to the cell membrane. The chain is 25 kDa ookinete surface antigen from Plasmodium gallinaceum.